A 300-amino-acid polypeptide reads, in one-letter code: Glutamyl-Q tRNA(Asp) synthetase (300 aa).

L-glutamate-binding positions include Arg-8–Thr-12 and Asp-44. The 'HIGH' region signature appears at Pro-11–Ser-21. Residues Cys-100, Cys-102, Tyr-122, and Cys-126 each coordinate Zn(2+). Residues Tyr-181 and Arg-199 each contribute to the L-glutamate site. Positions Lys-237 to Gln-241 match the 'KMSKS' region motif. Lys-240 contacts ATP.

It belongs to the class-I aminoacyl-tRNA synthetase family. GluQ subfamily. Zn(2+) is required as a cofactor.

Functionally, catalyzes the tRNA-independent activation of glutamate in presence of ATP and the subsequent transfer of glutamate onto a tRNA(Asp). Glutamate is transferred on the 2-amino-5-(4,5-dihydroxy-2-cyclopenten-1-yl) moiety of the queuosine in the wobble position of the QUC anticodon. In Synechococcus sp. (strain ATCC 27144 / PCC 6301 / SAUG 1402/1) (Anacystis nidulans), this protein is Glutamyl-Q tRNA(Asp) synthetase.